The following is a 391-amino-acid chain: Isocitrate dehydrogenase [NADP] (391 aa).

The D-threo-isocitrate site is built by S102, N104, R108, R118, and R142. D283 lines the Mg(2+) pocket.

The protein belongs to the isocitrate and isopropylmalate dehydrogenases family. Homodimer. Mg(2+) serves as cofactor. The cofactor is Mn(2+).

It carries out the reaction D-threo-isocitrate + NADP(+) = 2-oxoglutarate + CO2 + NADPH. Catalyzes the oxidative decarboxylation of isocitrate to 2-oxoglutarate and carbon dioxide with the concomitant reduction of NADP(+). The chain is Isocitrate dehydrogenase [NADP] (icd) from Streptococcus salivarius.